The sequence spans 551 residues: MSKVGSSLYSRLHGIFKESSIATAKSAKPRSQTKSTKFPSKLKASTASVGDGGQSSNDAKDSKNSKLTQKVEKFKRSCESESFRQVHGLYSAFIRRLREAKKFSTIDEVLQYQKKFDDIKSEDFVIRIMLLYGYSGMAEHAHKLFDEMPELNCERTVKSFNALLSAYVNSKKLDEAMKTFKELPEKLGITPDLVTYNTMIKALCRKGSMDDILSIFEELEKNGFEPDLISFNTLLEEFYRRELFVEGDRIWDLMKSKNLSPNIRSYNSRVRGLTRNKKFTDALNLIDVMKTEGISPDVHTYNALITAYRVDNNLEEVMKCYNEMKEKGLTPDTVTYCMLIPLLCKKGDLDRAVEVSEEAIKHKLLSRPNMYKPVVERLMGAGKIDEATQLVKNGKLQSYFRYLPDLSAGKKKTTSSPVSSSAKTTSTPVSSSPDTSSFLLSLSLAADSSSSDSDSSSPDSSSSVSSSPDSSSSVSSSPDSYSSFSSSPDSSSSVSSSLFSSSRENSSSPDYSNSVSSSLDYSGSVSSSSDYSSSVFPSANSSSSSSGLLDD.

The interval 22-67 is disordered; that stretch reads ATAKSAKPRSQTKSTKFPSKLKASTASVGDGGQSSNDAKDSKNSKL. Positions 29 to 48 are enriched in polar residues; that stretch reads PRSQTKSTKFPSKLKASTAS. Residues 58–67 show a composition bias toward basic and acidic residues; that stretch reads DAKDSKNSKL. PPR repeat units lie at residues 121–155, 156–191, 192–226, 227–261, 262–296, 297–331, and 332–366; these read SEDF…NCER, TVKS…GITP, DLVT…GFEP, DLIS…NLSP, NIRS…GISP, DVHT…GLTP, and DTVT…KLLS. Disordered regions lie at residues 409–435 and 449–551; these read GKKK…SPDT and SSSD…LLDD. A compositionally biased stretch (low complexity) spans 415–435; that stretch reads SSPVSSSAKTTSTPVSSSPDT.

The protein belongs to the PPR family. P subfamily.

This is Pentatricopeptide repeat-containing protein At3g13150 from Arabidopsis thaliana (Mouse-ear cress).